A 424-amino-acid chain; its full sequence is Serine hydroxymethyltransferase (424 aa).

Residues Leu118 and 122–124 each bind (6S)-5,6,7,8-tetrahydrofolate; that span reads GHL. Lys227 is modified (N6-(pyridoxal phosphate)lysine). Position 351-353 (351-353) interacts with (6S)-5,6,7,8-tetrahydrofolate; that stretch reads SPF.

The protein belongs to the SHMT family. In terms of assembly, homodimer. Requires pyridoxal 5'-phosphate as cofactor.

The protein localises to the cytoplasm. It carries out the reaction (6R)-5,10-methylene-5,6,7,8-tetrahydrofolate + glycine + H2O = (6S)-5,6,7,8-tetrahydrofolate + L-serine. Its pathway is one-carbon metabolism; tetrahydrofolate interconversion. It participates in amino-acid biosynthesis; glycine biosynthesis; glycine from L-serine: step 1/1. Catalyzes the reversible interconversion of serine and glycine with tetrahydrofolate (THF) serving as the one-carbon carrier. This reaction serves as the major source of one-carbon groups required for the biosynthesis of purines, thymidylate, methionine, and other important biomolecules. Also exhibits THF-independent aldolase activity toward beta-hydroxyamino acids, producing glycine and aldehydes, via a retro-aldol mechanism. This Thermosipho melanesiensis (strain DSM 12029 / CIP 104789 / BI429) protein is Serine hydroxymethyltransferase.